A 59-amino-acid polypeptide reads, in one-letter code: Large ribosomal subunit protein bL32 (59 aa).

The interval 35–59 is disordered; that stretch reads EAHLRHHISPNGYYRGRKVVKTKND. A compositionally biased stretch (basic residues) spans 49-59; the sequence is RGRKVVKTKND.

The protein belongs to the bacterial ribosomal protein bL32 family.

The chain is Large ribosomal subunit protein bL32 from Polynucleobacter asymbioticus (strain DSM 18221 / CIP 109841 / QLW-P1DMWA-1) (Polynucleobacter necessarius subsp. asymbioticus).